The following is a 1411-amino-acid chain: Early endosome antigen 1 (1411 aa).

The disordered stretch occupies residues 1–27; it reads MLRRILQRTPGRVGSQGSDLDSSATPI. Over residues 15–27 the composition is skewed to polar residues; it reads SQGSDLDSSATPI. The C2H2-type zinc finger occupies 41 to 64; that stretch reads FICPQCMKSLGSADELFKHYEAVH. A phosphoserine mark is found at Ser-52 and Ser-70. A coiled-coil region spans residues 74-1348; it reads GESNLALKRD…IKHTQALNRK (1275 aa). Residues 473-501 are disordered; sequence VTNSTELQHQLDKTKQQHQEQQALQQSTT. A compositionally biased stretch (basic and acidic residues) spans 481-490; sequence HQLDKTKQQH. The segment at 1352 to 1410 adopts an FYVE-type zinc-finger fold; the sequence is DNEVQNCMACGKGFSVTVRRHHCRQCGNIFCAECSAKNALTPSSKKPVRVCDACFNDLQ. Zn(2+) is bound by residues Cys-1358, Cys-1361, Cys-1374, Cys-1377, Cys-1382, Cys-1385, Cys-1402, and Cys-1405.

In terms of assembly, homodimer. Binds STX6. Binds RAB5A, RAB5B, RAB5C and RAB22A that have been activated by GTP-binding. Interacts with RAB31. Interacts with ERBB2. Interacts with SAMD9 and SAMD9L. May interact with PLEKHF2.

It localises to the cytoplasm. It is found in the early endosome membrane. Functionally, binds phospholipid vesicles containing phosphatidylinositol 3-phosphate and participates in endosomal trafficking. The chain is Early endosome antigen 1 (EEA1) from Homo sapiens (Human).